The chain runs to 359 residues: tRNA-specific 2-thiouridylase MnmA (359 aa).

ATP contacts are provided by residues 7 to 14 and Leu33; that span reads GLSGGVDS. The Nucleophile role is filled by Cys94. Cys94 and Cys193 form a disulfide bridge. Gly119 lines the ATP pocket. The segment at 143-145 is interaction with tRNA; it reads KDQ. Catalysis depends on Cys193, which acts as the Cysteine persulfide intermediate. An interaction with tRNA region spans residues 298–299; that stretch reads RY.

This sequence belongs to the MnmA/TRMU family.

Its subcellular location is the cytoplasm. It catalyses the reaction S-sulfanyl-L-cysteinyl-[protein] + uridine(34) in tRNA + AH2 + ATP = 2-thiouridine(34) in tRNA + L-cysteinyl-[protein] + A + AMP + diphosphate + H(+). Functionally, catalyzes the 2-thiolation of uridine at the wobble position (U34) of tRNA, leading to the formation of s(2)U34. The polypeptide is tRNA-specific 2-thiouridylase MnmA (Trichodesmium erythraeum (strain IMS101)).